Consider the following 65-residue polypeptide: U15-hexatoxin-Mg1b (65 aa).

Post-translationally, contains 4 disulfide bonds. Expressed by the venom gland.

Its subcellular location is the secreted. Its function is as follows. In vivo, intrathorax injection into crickets causes death. This chain is U15-hexatoxin-Mg1b, found in Macrothele gigas (Japanese funnel web spider).